A 248-amino-acid chain; its full sequence is 3-deoxy-manno-octulosonate cytidylyltransferase (248 aa).

The protein belongs to the KdsB family.

The protein localises to the cytoplasm. The catalysed reaction is 3-deoxy-alpha-D-manno-oct-2-ulosonate + CTP = CMP-3-deoxy-beta-D-manno-octulosonate + diphosphate. It functions in the pathway nucleotide-sugar biosynthesis; CMP-3-deoxy-D-manno-octulosonate biosynthesis; CMP-3-deoxy-D-manno-octulosonate from 3-deoxy-D-manno-octulosonate and CTP: step 1/1. The protein operates within bacterial outer membrane biogenesis; lipopolysaccharide biosynthesis. Functionally, activates KDO (a required 8-carbon sugar) for incorporation into bacterial lipopolysaccharide in Gram-negative bacteria. The polypeptide is 3-deoxy-manno-octulosonate cytidylyltransferase (Salmonella enteritidis PT4 (strain P125109)).